The sequence spans 67 residues: Small ribosomal subunit protein bS21 (67 aa).

It belongs to the bacterial ribosomal protein bS21 family.

The sequence is that of Small ribosomal subunit protein bS21 from Hydrogenobaculum sp. (strain Y04AAS1).